A 190-amino-acid chain; its full sequence is MKVFAYIALATVVAGANIRNHFGDNCKGGYLDYPNIAQRICASALHDKIKGAVTVAFSQLPQHSYMNGYQNTRDGGICGSRQKQQNVGNTDHKCLPKLAGGAEYAGSSWTAPGFKAASEKDMECTSEMAPHALVLNDGHKYALGGMEKDMINTLYSMAIEGKGFQELPTEFGAFEIEKEGAQQRAQEIKA.

An N-terminal signal peptide occupies residues 1–15; it reads MKVFAYIALATVVAG.

The protein localises to the secreted. This is an uncharacterized protein from Arthroderma benhamiae (strain ATCC MYA-4681 / CBS 112371) (Trichophyton mentagrophytes).